Reading from the N-terminus, the 827-residue chain is Probable beta-glucosidase H (827 aa).

Aspartate 223 is a catalytic residue. One can recognise a PA14 domain in the interval 387–546 (RLLTNAVMHF…DSAEMVRSAV (160 aa)). Residues asparagine 471, asparagine 594, asparagine 600, and asparagine 625 are each glycosylated (N-linked (GlcNAc...) asparagine).

This sequence belongs to the glycosyl hydrolase 3 family.

The protein resides in the secreted. It carries out the reaction Hydrolysis of terminal, non-reducing beta-D-glucosyl residues with release of beta-D-glucose.. It functions in the pathway glycan metabolism; cellulose degradation. Beta-glucosidases are one of a number of cellulolytic enzymes involved in the degradation of cellulosic biomass. Catalyzes the last step releasing glucose from the inhibitory cellobiose. The chain is Probable beta-glucosidase H (bglH) from Aspergillus oryzae (strain ATCC 42149 / RIB 40) (Yellow koji mold).